A 401-amino-acid polypeptide reads, in one-letter code: S-adenosylmethionine synthase (401 aa).

Residue 136–141 (GTGSSD) participates in ATP binding. The segment at 278–305 (GDDGSVGRGNRSNGLITPSRPMSMEATS) is disordered.

This sequence belongs to the AdoMet synthase 2 family. It depends on Mg(2+) as a cofactor.

It catalyses the reaction L-methionine + ATP + H2O = S-adenosyl-L-methionine + phosphate + diphosphate. The protein operates within amino-acid biosynthesis; S-adenosyl-L-methionine biosynthesis; S-adenosyl-L-methionine from L-methionine: step 1/1. Its function is as follows. Catalyzes the formation of S-adenosylmethionine from methionine and ATP. In Methanococcoides burtonii (strain DSM 6242 / NBRC 107633 / OCM 468 / ACE-M), this protein is S-adenosylmethionine synthase.